The chain runs to 920 residues: Disintegrin and metalloproteinase domain-containing protein 19 (920 aa).

An N-terminal signal peptide occupies residues 1–26 (MPGRAGVARFCLLALALQLHWPLAAC). The propeptide occupies 27-204 (EPGWTTRGSQ…TKKQPRRMKR (178 aa)). Residues 27–703 (EPGWTTRGSQ…VDSGPLPPKS (677 aa)) lie on the Extracellular side of the membrane. Residues 131–138 (STCRGIRG) carry the Cysteine switch motif. Cysteine 133 contacts Zn(2+). An N-linked (GlcNAc...) asparagine glycan is attached at asparagine 145. The Peptidase M12B domain maps to 211–409 (KYVELYLVAD…GGGMCLSNMP (199 aa)). 3 cysteine pairs are disulfide-bonded: cysteine 321–cysteine 404, cysteine 361–cysteine 388, and cysteine 362–cysteine 371. Histidine 346 lines the Zn(2+) pocket. Glutamate 347 is a catalytic residue. Histidine 350 and histidine 356 together coordinate Zn(2+). A Disintegrin domain is found at 417–503 (GRRCGNGYLE…HCPTNYYQMD (87 aa)). Residues asparagine 445 and asparagine 448 are each glycosylated (N-linked (GlcNAc...) asparagine). Cysteine 475 and cysteine 495 are joined by a disulfide. Asparagine 649 carries an N-linked (GlcNAc...) asparagine glycan. Residues 654–686 (ETEGCGKKCNGHGVCNNNKNCHCFPGWSPPFCN) form the EGF-like domain. 3 disulfides stabilise this stretch: cysteine 658-cysteine 668, cysteine 662-cysteine 674, and cysteine 676-cysteine 685. The helical transmembrane segment at 704 to 724 (VGPVIAGVFSALFVLAVLVLL) threads the bilayer. Residues 725–920 (CHCYRQSHKL…RVGAIISSKI (196 aa)) lie on the Cytoplasmic side of the membrane. The tract at residues 755–920 (SQSGGTGHAN…RVGAIISSKI (166 aa)) is disordered. The segment covering 767 to 783 (FKLQTPQGKRKVTNTPE) has biased composition (polar residues). Over residues 825–834 (ARIERKESAR) the composition is skewed to basic and acidic residues. The short motif at 835–846 (RPPPSRPMPPAP) is the SH3-binding element. Pro residues-rich tracts occupy residues 835–846 (RPPPSRPMPPAP) and 888–903 (TSGPQPPRPPAVPVPK).

Interacts with SH3PXD2A. Requires Zn(2+) as cofactor. Post-translationally, the precursor is cleaved by a furin endopeptidase. In terms of tissue distribution, widely expressed, with the highest expression in bone, heart and lung, followed by brain and spleen and relatively low expression in liver, skeletal muscle, kidney and testis. In bone, primarily expressed in cell of the osteoblast lineage and not detected in mature osteoclasts.

The protein localises to the membrane. Its function is as follows. Participates in the proteolytic processing of beta-type neuregulin isoforms which are involved in neurogenesis and synaptogenesis, suggesting a regulatory role in glial cell. Also cleaves alpha-2 macroglobulin. May be involved in osteoblast differentiation and/or osteoblast activity in bone. The polypeptide is Disintegrin and metalloproteinase domain-containing protein 19 (Adam19) (Mus musculus (Mouse)).